The chain runs to 252 residues: tRNA (guanine-N(7)-)-methyltransferase (252 aa).

Positions 51, 76, 103, and 125 each coordinate S-adenosyl-L-methionine. Residue D125 is part of the active site. Residues K129, D159, and 199–202 (TYYE) contribute to the substrate site.

The protein belongs to the class I-like SAM-binding methyltransferase superfamily. TrmB family.

It carries out the reaction guanosine(46) in tRNA + S-adenosyl-L-methionine = N(7)-methylguanosine(46) in tRNA + S-adenosyl-L-homocysteine. The protein operates within tRNA modification; N(7)-methylguanine-tRNA biosynthesis. Catalyzes the formation of N(7)-methylguanine at position 46 (m7G46) in tRNA. In Bacteroides thetaiotaomicron (strain ATCC 29148 / DSM 2079 / JCM 5827 / CCUG 10774 / NCTC 10582 / VPI-5482 / E50), this protein is tRNA (guanine-N(7)-)-methyltransferase.